The primary structure comprises 399 residues: S-adenosylmethionine synthase (399 aa).

His17 is an ATP binding site. A Mg(2+)-binding site is contributed by Asp19. Glu45 contributes to the K(+) binding site. L-methionine contacts are provided by Glu58 and Gln101. Residues 101 to 111 are flexible loop; the sequence is QSADIAMGVDQ. ATP is bound by residues 177 to 179, 244 to 245, Asp253, 259 to 260, Ala276, and Lys280; these read DGK, RF, and RK. An L-methionine-binding site is contributed by Asp253. Lys284 contributes to the L-methionine binding site.

It belongs to the AdoMet synthase family. Homotetramer; dimer of dimers. Mg(2+) is required as a cofactor. K(+) serves as cofactor.

It is found in the cytoplasm. The enzyme catalyses L-methionine + ATP + H2O = S-adenosyl-L-methionine + phosphate + diphosphate. Its pathway is amino-acid biosynthesis; S-adenosyl-L-methionine biosynthesis; S-adenosyl-L-methionine from L-methionine: step 1/1. In terms of biological role, catalyzes the formation of S-adenosylmethionine (AdoMet) from methionine and ATP. The overall synthetic reaction is composed of two sequential steps, AdoMet formation and the subsequent tripolyphosphate hydrolysis which occurs prior to release of AdoMet from the enzyme. This is S-adenosylmethionine synthase from Bacillus thuringiensis subsp. konkukian (strain 97-27).